The chain runs to 472 residues: Protein c-ets-2-A (472 aa).

The PNT domain occupies 85–170; it reads NTFNGFAKKR…EHLEEMMKEH (86 aa). The ETS DNA-binding region spans 366–446; sequence IQLWQFLLEL…SGKRYVYRFV (81 aa).

This sequence belongs to the ETS family.

The protein resides in the nucleus. In terms of biological role, probable transcription factor. The sequence is that of Protein c-ets-2-A (ets2-a) from Xenopus laevis (African clawed frog).